Consider the following 485-residue polypeptide: Cobyric acid synthase (485 aa).

In terms of domain architecture, GATase cobBQ-type spans 250 to 448; that stretch reads TQTVAVIAYP…LHGMFEDPRV (199 aa). The active-site Nucleophile is the cysteine 334. The active site involves histidine 440.

It belongs to the CobB/CobQ family. CobQ subfamily.

It participates in cofactor biosynthesis; adenosylcobalamin biosynthesis. Its function is as follows. Catalyzes amidations at positions B, D, E, and G on adenosylcobyrinic A,C-diamide. NH(2) groups are provided by glutamine, and one molecule of ATP is hydrogenolyzed for each amidation. The polypeptide is Cobyric acid synthase (Polaromonas naphthalenivorans (strain CJ2)).